A 125-amino-acid chain; its full sequence is Small ribosomal subunit protein uS12 (125 aa).

D89 carries the post-translational modification 3-methylthioaspartic acid.

Belongs to the universal ribosomal protein uS12 family. As to quaternary structure, part of the 30S ribosomal subunit. Contacts proteins S8 and S17. May interact with IF1 in the 30S initiation complex.

In terms of biological role, with S4 and S5 plays an important role in translational accuracy. Interacts with and stabilizes bases of the 16S rRNA that are involved in tRNA selection in the A site and with the mRNA backbone. Located at the interface of the 30S and 50S subunits, it traverses the body of the 30S subunit contacting proteins on the other side and probably holding the rRNA structure together. The combined cluster of proteins S8, S12 and S17 appears to hold together the shoulder and platform of the 30S subunit. In Bordetella avium (strain 197N), this protein is Small ribosomal subunit protein uS12.